The following is a 124-amino-acid chain: U-scoloptoxin-Er5d (124 aa).

Positions 1-22 (MKTNCEFPLLCLLIVLVANVEG) are cleaved as a signal peptide. A propeptide spanning residues 23–94 (EVEDNELKMV…KRLWRNWERR (72 aa)) is cleaved from the precursor. RLWRNWE repeat units follow at residues 34–40 (RLWRNWE), 61–67 (RLWRNWE), and 86–92 (RLWRNWE). Position 95 is a pyrrolidone carboxylic acid (glutamine 95). One copy of the RLWRNWE 4; approximate repeat lies at 107–113 (ELWRNWE). A propeptide spanning residues 112-124 (WEDLKRRQVGRFE) is cleaved from the precursor.

It belongs to the scoloptoxin-08 family. As to expression, expressed by the venom gland.

The protein localises to the secreted. The chain is U-scoloptoxin-Er5d from Ethmostigmus rubripes (Giant centipede).